Reading from the N-terminus, the 283-residue chain is Pantothenate synthetase (283 aa).

Residue 30–37 participates in ATP binding; the sequence is MGNLHDGH. Residue His-37 is the Proton donor of the active site. Residue Gln-61 coordinates (R)-pantoate. Gln-61 contributes to the beta-alanine binding site. 149 to 152 lines the ATP pocket; the sequence is GEKD. Gln-155 serves as a coordination point for (R)-pantoate. 186-189 contacts ATP; that stretch reads LSSR.

Belongs to the pantothenate synthetase family. Homodimer.

Its subcellular location is the cytoplasm. The catalysed reaction is (R)-pantoate + beta-alanine + ATP = (R)-pantothenate + AMP + diphosphate + H(+). It functions in the pathway cofactor biosynthesis; (R)-pantothenate biosynthesis; (R)-pantothenate from (R)-pantoate and beta-alanine: step 1/1. Functionally, catalyzes the condensation of pantoate with beta-alanine in an ATP-dependent reaction via a pantoyl-adenylate intermediate. This chain is Pantothenate synthetase, found in Shigella dysenteriae serotype 1 (strain Sd197).